The following is a 399-amino-acid chain: RNA polymerase sigma factor SigA1 (399 aa).

Residues 1 to 73 (MTQLISIDKE…DEDSVGEDED (73 aa)) form a disordered region. A compositionally biased stretch (acidic residues) spans 60-73 (DAIDDEDSVGEDED). Residues 167–237 (MVQSNLRLVV…TRAIADQSRT (71 aa)) are sigma-70 factor domain-2. Positions 191 to 194 (DLIQ) match the Interaction with polymerase core subunit RpoC motif. The interval 246-321 (ETISRIKKTT…EADGETPEDE (76 aa)) is sigma-70 factor domain-3. Residues 334-387 (VLSTLSPRERDVLRLRYGLDDGRMKTLEEIGQLFNVTRERIRQIEAKALRKLRH) form a sigma-70 factor domain-4 region. Positions 360–379 (LEEIGQLFNVTRERIRQIEA) form a DNA-binding region, H-T-H motif.

The protein belongs to the sigma-70 factor family. RpoD/SigA subfamily. As to quaternary structure, interacts transiently with the RNA polymerase catalytic core.

It localises to the cytoplasm. Its function is as follows. Sigma factors are initiation factors that promote the attachment of RNA polymerase to specific initiation sites and are then released. This sigma factor is the primary sigma factor during exponential growth. This is RNA polymerase sigma factor SigA1 from Synechococcus elongatus (strain ATCC 33912 / PCC 7942 / FACHB-805) (Anacystis nidulans R2).